A 627-amino-acid polypeptide reads, in one-letter code: Endoglucanase 5 (627 aa).

The first 26 residues, Met-1–Ala-26, serve as a signal peptide directing secretion. Asp-83 acts as the Nucleophile in catalysis. Asn-196 carries N-linked (GlcNAc...) asparagine glycosylation. Residue His-416 is part of the active site. N-linked (GlcNAc...) asparagine glycosylation occurs at Asn-465. Catalysis depends on residues Asp-468 and Glu-477. The N-linked (GlcNAc...) asparagine glycan is linked to Asn-561.

It belongs to the glycosyl hydrolase 9 (cellulase E) family.

Its subcellular location is the secreted. The catalysed reaction is Endohydrolysis of (1-&gt;4)-beta-D-glucosidic linkages in cellulose, lichenin and cereal beta-D-glucans.. The polypeptide is Endoglucanase 5 (Arabidopsis thaliana (Mouse-ear cress)).